We begin with the raw amino-acid sequence, 873 residues long: DNA mismatch repair protein MutS (873 aa).

628-635 (GPNMAGKS) contacts ATP.

The protein belongs to the DNA mismatch repair MutS family.

In terms of biological role, this protein is involved in the repair of mismatches in DNA. It is possible that it carries out the mismatch recognition step. This protein has a weak ATPase activity. The chain is DNA mismatch repair protein MutS from Chlorobium chlorochromatii (strain CaD3).